A 437-amino-acid polypeptide reads, in one-letter code: Ribosomal protein uS12 methylthiotransferase RimO (437 aa).

An MTTase N-terminal domain is found at 9–128 (NKINVITLGC…LLKALGADYK (120 aa)). 6 residues coordinate [4Fe-4S] cluster: Cys18, Cys57, Cys91, Cys152, Cys156, and Cys159. The 231-residue stretch at 138-368 (TTPKNYAYLK…MELQSQISWD (231 aa)) folds into the Radical SAM core domain. Residues 371–437 (QEKVGQVFRC…TEFDLYGEPA (67 aa)) enclose the TRAM domain.

Belongs to the methylthiotransferase family. RimO subfamily. Requires [4Fe-4S] cluster as cofactor.

It localises to the cytoplasm. It catalyses the reaction L-aspartate(89)-[ribosomal protein uS12]-hydrogen + (sulfur carrier)-SH + AH2 + 2 S-adenosyl-L-methionine = 3-methylsulfanyl-L-aspartate(89)-[ribosomal protein uS12]-hydrogen + (sulfur carrier)-H + 5'-deoxyadenosine + L-methionine + A + S-adenosyl-L-homocysteine + 2 H(+). Functionally, catalyzes the methylthiolation of an aspartic acid residue of ribosomal protein uS12. The chain is Ribosomal protein uS12 methylthiotransferase RimO from Flavobacterium johnsoniae (strain ATCC 17061 / DSM 2064 / JCM 8514 / BCRC 14874 / CCUG 350202 / NBRC 14942 / NCIMB 11054 / UW101) (Cytophaga johnsonae).